Consider the following 268-residue polypeptide: Putative esterase/lipase 2 (268 aa).

The active site involves histidine 29. Serine 98 serves as the catalytic Charge relay system.

The protein belongs to the lipase/esterase LIP3/BchO family.

This chain is Putative esterase/lipase 2, found in Mycoplasma genitalium (strain ATCC 33530 / DSM 19775 / NCTC 10195 / G37) (Mycoplasmoides genitalium).